Consider the following 154-residue polypeptide: Ribonuclease HI (154 aa).

An RNase H type-1 domain is found at 1–142 (MPKQIEIFTD…CDELAKKGAE (142 aa)). Positions 10, 48, 70, and 134 each coordinate Mg(2+).

The protein belongs to the RNase H family. As to quaternary structure, monomer. The cofactor is Mg(2+).

The protein resides in the cytoplasm. It carries out the reaction Endonucleolytic cleavage to 5'-phosphomonoester.. Its function is as follows. Endonuclease that specifically degrades the RNA of RNA-DNA hybrids. This Haemophilus influenzae (strain ATCC 51907 / DSM 11121 / KW20 / Rd) protein is Ribonuclease HI (rnhA).